The chain runs to 195 residues: Heterogeneous nuclear ribonucleoprotein A/B (195 aa).

Residues 1-23 (EEVADGQAHGEXVYREEHHEGEK) form a disordered region. Residues 12 to 23 (XVYREEHHEGEK) are compositionally biased toward basic and acidic residues. Residues 32-48 (EETKLFVGALSWETTEK) enclose the RRM domain. Asymmetric dimethylarginine occurs at positions 119 and 122. A Phosphoserine; by CK2 modification is found at S173.

Extensively phosphorylated on tyrosine residues.

The protein localises to the cytoplasm. The protein resides in the nucleus. Functionally, may regulate mRNA translation and stability. It binds to poly(A) and poly(U) regions of RNA. This binding is inhibited when the protein is phosphorylated. The chain is Heterogeneous nuclear ribonucleoprotein A/B from Artemia salina (Brine shrimp).